Reading from the N-terminus, the 285-residue chain is Dermonecrotic toxin LiSicTox-alphaIA2aii (285 aa).

Positions 1–5 (DVEER) are excised as a propeptide. Residue His-17 is part of the active site. Glu-37 and Asp-39 together coordinate Mg(2+). The active-site Nucleophile is His-53. 2 disulfide bridges follow: Cys-57-Cys-63 and Cys-59-Cys-202. Asp-97 provides a ligand contact to Mg(2+). An N-linked (GlcNAc...) asparagine glycan is attached at Asn-262.

This sequence belongs to the arthropod phospholipase D family. Class II subfamily. Class IIa sub-subfamily. It depends on Mg(2+) as a cofactor. As to expression, expressed by the venom gland.

The protein resides in the secreted. The catalysed reaction is an N-(acyl)-sphingosylphosphocholine = an N-(acyl)-sphingosyl-1,3-cyclic phosphate + choline. It catalyses the reaction an N-(acyl)-sphingosylphosphoethanolamine = an N-(acyl)-sphingosyl-1,3-cyclic phosphate + ethanolamine. The enzyme catalyses a 1-acyl-sn-glycero-3-phosphocholine = a 1-acyl-sn-glycero-2,3-cyclic phosphate + choline. It carries out the reaction a 1-acyl-sn-glycero-3-phosphoethanolamine = a 1-acyl-sn-glycero-2,3-cyclic phosphate + ethanolamine. Dermonecrotic toxins cleave the phosphodiester linkage between the phosphate and headgroup of certain phospholipids (sphingolipid and lysolipid substrates), forming an alcohol (often choline) and a cyclic phosphate. This toxin acts on sphingomyelin (SM) with high activity. It may also act on ceramide phosphoethanolamine (CPE), lysophosphatidylcholine (LPC) and lysophosphatidylethanolamine (LPE), but not on lysophosphatidylserine (LPS), and lysophosphatidylglycerol (LPG). It acts by transphosphatidylation, releasing exclusively cyclic phosphate products as second products. Shows high hemolytic activity. Induces dermonecrosis, vascular permeability, edema, inflammatory response, and platelet aggregation. Also shows cytotoxicity against renal epithelial cells. In addition, also induces hemolysis in a complement-dependent manner and probably also in a complement-independent manner. The hemolysis provoked in a complement-independent manner may be composed of several steps. The toxin may bind to erythrocyte membranes, may hydrolyze membrane phospholipids (SM and LPC) thus generating metabolism products that may cause hemolysis, probably by provoking an increase of calcium inside cells. The calcium influx may be due to the opening of L-type calcium channels, since L-type calcium channel blockers inhibit calcium influx. In vivo, is lethal to mice when intraperitoneally injected. This Loxosceles intermedia (Brown spider) protein is Dermonecrotic toxin LiSicTox-alphaIA2aii.